Here is a 795-residue protein sequence, read N- to C-terminus: MSQDRKPIVGSFHFVCALALIVGSMTPFSNELESMVDYSNRNLTHVPKDLPPRTKALSLSQNSISELRMPDISFLSELRVLRLSHNRIRSLDFHVFLFNQDLEYLDVSHNRLQNISCCPMASLRHLDLSFNDFDVLPVCKEFGNLTKLTFLGLSAAKFRQLDLLPVAHLHLSCILLDLVSYHIKGGETESLQIPNTTVLHLVFHPNSLFSVQVNMSVNALGHLQLSNIKLNDENCQRLMTFLSELTRGPTLLNVTLQHIETTWKCSVKLFQFFWPRPVEYLNIYNLTITERIDREEFTYSETALKSLMIEHVKNQVFLFSKEALYSVFAEMNIKMLSISDTPFIHMVCPPSPSSFTFLNFTQNVFTDSVFQGCSTLKRLQTLILQRNGLKNFFKVALMTKNMSSLETLDVSLNSLNSHAYDRTCAWAESILVLNLSSNMLTGSVFRCLPPKVKVLDLHNNRIMSIPKDVTHLQALQELNVASNSLTDLPGCGAFSSLSVLVIDHNSVSHPSEDFFQSCQNIRSLTAGNNPFQCTCELRDFVKNIGWVAREVVEGWPDSYRCDYPESSKGTALRDFHMSPLSCDTVLLTVTIGATMLVLAVTGAFLCLYFDLPWYVRMLCQWTQTRHRARHIPLEELQRNLQFHAFVSYSEHDSAWVKNELLPNLEKDDIRVCLHERNFVPGKSIVENIINFIEKSYKAIFVLSPHFIQSEWCHYELYFAHHNLFHEGSDNLILILLEPILQNNIPSRYHKLRALMAQRTYLEWPTEKGKRGLFWANLRASFIMKLALVNEDDVKT.

The first 27 residues, 1–27, serve as a signal peptide directing secretion; that stretch reads MSQDRKPIVGSFHFVCALALIVGSMTP. Over 28-584 the chain is Extracellular; the sequence is FSNELESMVD…FHMSPLSCDT (557 aa). Residue N42 is glycosylated (N-linked (GlcNAc...) asparagine). 19 LRR repeats span residues 54–77, 78–101, 102–125, 126–150, 151–175, 176–199, 200–223, 224–250, 251–278, 279–308, 309–337, 338–361, 362–388, 389–414, 415–437, 438–457, 458–478, 479–500, and 501–524; these read TKAL…FLSE, LRVL…FNQD, LEYL…SLRH, LDLS…KLTF, LGLS…SCIL, LDLV…TTVL, HLVF…LGHL, QLSN…RGPT, LLNV…PRPV, EYLN…KSLM, IEHV…KMLS, ISDT…LNFT, QNVF…QRNG, LKNF…SLNS, LNSH…NLSS, NMLT…VLDL, HNNR…LQEL, NVAS…LSVL, and VIDH…IRSL. N-linked (GlcNAc...) asparagine glycosylation occurs at N114. Residues C117 and C139 are joined by a disulfide bond. An N-linked (GlcNAc...) asparagine glycan is attached at N144. N-linked (GlcNAc...) asparagine glycosylation is found at N195 and N214. Residues C235 and C265 are joined by a disulfide bond. Residues N253 and N285 are each glycosylated (N-linked (GlcNAc...) asparagine). An intrachain disulfide couples C348 to C373. Residue N359 is glycosylated (N-linked (GlcNAc...) asparagine). N-linked (GlcNAc...) asparagine glycosylation is found at N401 and N434. C424 and C447 are disulfide-bonded. The LRRCT domain occupies 525 to 576; that stretch reads TAGNNPFQCTCELRDFVKNIGWVAREVVEGWPDSYRCDYPESSKGTALRDFH. The helical transmembrane segment at 585-605 threads the bilayer; it reads VLLTVTIGATMLVLAVTGAFL. Over 606-795 the chain is Cytoplasmic; sequence CLYFDLPWYV…ALVNEDDVKT (190 aa). One can recognise a TIR domain in the interval 640–781; the sequence is LQFHAFVSYS…LFWANLRASF (142 aa).

The protein belongs to the Toll-like receptor family. As to quaternary structure, homodimer (via cytoplasmic TIR domain). Heterodimer with TLR2 via their respective extracellular domains. Binds MYD88 via their respective TIR domains. Interacts with CD36, following CD36 stimulation by oxLDL or amyloid-beta 42, and forms a heterodimer with TLR4. The trimeric complex is internalized and triggers inflammatory response. LYN kinase activity facilitates TLR4:TLR6 heterodimerization and signal initiation. The heterodimer TLR2:TLR6 interacts with CD14 and CD36 in response to triacylated lipopeptides. In terms of tissue distribution, detected in thymus, spleen, ovary and lung. Expressed in macrohpages.

Its subcellular location is the cell membrane. The protein resides in the cytoplasmic vesicle. It localises to the phagosome membrane. It is found in the membrane raft. The protein localises to the golgi apparatus. Functionally, participates in the innate immune response to Gram-positive bacteria and fungi. Specifically recognizes diacylated and, to a lesser extent, triacylated lipopeptides. In response to diacylated lipopeptides, forms the activation cluster TLR2:TLR6:CD14:CD36, this cluster triggers signaling from the cell surface and subsequently is targeted to the Golgi in a lipid-raft dependent pathway. Acts via MYD88 and TRAF6, leading to NF-kappa-B activation, cytokine secretion and the inflammatory response. Recognizes mycoplasmal macrophage-activating lipopeptide-2kD (MALP-2), soluble tuberculosis factor (STF), phenol-soluble modulin (PSM) and B.burgdorferi outer surface protein A lipoprotein (OspA-L) cooperatively with TLR2. In complex with TLR4, promotes sterile inflammation in monocytes/macrophages in response to oxidized low-density lipoprotein (oxLDL) or amyloid-beta 42. In this context, the initial signal is provided by oxLDL- or amyloid-beta 42-binding to CD36. This event induces the formation of a heterodimer of TLR4 and TLR6, which is rapidly internalized and triggers inflammatory response, leading to the NF-kappa-B-dependent production of CXCL1, CXCL2 and CCL9 cytokines, via MYD88 signaling pathway, and CCL5 cytokine, via TICAM1 signaling pathway, as well as IL1B secretion. The sequence is that of Toll-like receptor 6 (Tlr6) from Mus musculus (Mouse).